A 341-amino-acid polypeptide reads, in one-letter code: Keratin-associated protein 29-1 (341 aa).

7 tandem repeats follow at residues 5-9 (CCPGN), 115-119 (CCQEK), 120-124 (CCDAS), 150-154 (CCDAG), 240-244 (CCVPS), 276-280 (CCKPA), and 307-311 (CCVTG). The interval 5–311 (CCPGNTTAIP…GCKSACCVTG (307 aa)) is 7 X 5 AA repeats of C-C-X(3).

Belongs to the KRTAP type 10 family.

This Homo sapiens (Human) protein is Keratin-associated protein 29-1 (KRTAP29-1).